We begin with the raw amino-acid sequence, 30 residues long: Uperin-6.1 (30 aa).

In terms of tissue distribution, expressed by the skin dorsal glands.

Its subcellular location is the secreted. This chain is Uperin-6.1, found in Uperoleia inundata (Floodplain toadlet).